We begin with the raw amino-acid sequence, 71 residues long: UPF0346 protein SAK_1533 (71 aa).

It belongs to the UPF0346 family.

The sequence is that of UPF0346 protein SAK_1533 from Streptococcus agalactiae serotype Ia (strain ATCC 27591 / A909 / CDC SS700).